The primary structure comprises 142 residues: Large ribosomal subunit protein uL13 (142 aa).

It belongs to the universal ribosomal protein uL13 family. In terms of assembly, part of the 50S ribosomal subunit.

This protein is one of the early assembly proteins of the 50S ribosomal subunit, although it is not seen to bind rRNA by itself. It is important during the early stages of 50S assembly. The polypeptide is Large ribosomal subunit protein uL13 (Marinomonas sp. (strain MWYL1)).